The sequence spans 861 residues: Protein argonaute-3 (861 aa).

Residue Met1 is modified to N-acetylmethionine. One can recognise a PAZ domain in the interval 230–349 (PVIQFMCEVL…LPLEVCNIVA (120 aa)). One can recognise a Piwi domain in the interval 518-820 (LIIVILPGKT…VAFRARYHLV (303 aa)). The segment at 530 to 567 (YAEVKRVGDTLLGMATQCVQVKNVIKTSPQTLSNLCLK) is interaction with guide RNA. The a divalent metal cation site is built by Asp598, Glu638, and Asp670. The segment at 758–806 (QGTSRPSHYHVLWDDNCFTADELQLLTYQPSAHTYVHCTRSVSIPAPAY) is interaction with guide RNA. His809 provides a ligand contact to a divalent metal cation. Positions 824–847 (RDSAEGSHVSGQSNGRDPQALAKA) are disordered. Phosphoserine is present on Ser826.

Belongs to the argonaute family. Ago subfamily. In terms of assembly, interacts with EIF4B, IMP8, PRMT5 and TNRC6B. Interacts with APOBEC3F, APOBEC3G and APOBEC3H. Interacts with EDC4. Ubiquitinated on surface-exposed lysines by a SCF-like E3 ubiquitin-protein ligase complex containing ZSWIM8 during target-directed microRNA degradation (TDMD), a process that mediates degradation of microRNAs (miRNAs). Ubiquitination by the SCF-like E3 ubiquitin-protein ligase complex containing ZSWIM8 leads to its subsequent degradation, thereby exposing miRNAs for degradation. ZSWIM8 recognizes and binds AGO3 when it is engaged with a TDMD target.

It localises to the cytoplasm. It is found in the P-body. It carries out the reaction Endonucleolytic cleavage to 5'-phosphomonoester.. Its function is as follows. Required for RNA-mediated gene silencing (RNAi). Binds to short RNAs such as microRNAs (miRNAs) and represses the translation of mRNAs which are complementary to them. Proposed to be involved in stabilization of small RNA derivates (siRNA) derived from processed RNA polymerase III-transcribed Alu repeats containing a DR2 retinoic acid response element (RARE) in stem cells and in the subsequent siRNA-dependent degradation of a subset of RNA polymerase II-transcribed coding mRNAs by recruiting a mRNA decapping complex involving EDC4. Possesses RNA slicer activity but only on select RNAs bearing 5'- and 3'-flanking sequences to the region of guide-target complementarity. The chain is Protein argonaute-3 (AGO3) from Bos taurus (Bovine).